Consider the following 221-residue polypeptide: Small ribosomal subunit protein uS2 (221 aa).

The tract at residues 202–221 (KVKMPQQNQRGRPQRRFQRR) is disordered.

Belongs to the universal ribosomal protein uS2 family.

The sequence is that of Small ribosomal subunit protein uS2 from Methanococcus vannielii (strain ATCC 35089 / DSM 1224 / JCM 13029 / OCM 148 / SB).